Reading from the N-terminus, the 54-residue chain is Ribulose bisphosphate carboxylase large chain (54 aa).

The propeptide occupies 1 to 2 (MS). The residue at position 3 (proline 3) is an N-acetylproline. Lysine 14 carries the post-translational modification N6,N6,N6-trimethyllysine.

Belongs to the RuBisCO large chain family. Type I subfamily. As to quaternary structure, heterohexadecamer of 8 large chains and 8 small chains.

The protein resides in the plastid. Its subcellular location is the chloroplast. The enzyme catalyses 2 (2R)-3-phosphoglycerate + 2 H(+) = D-ribulose 1,5-bisphosphate + CO2 + H2O. The catalysed reaction is D-ribulose 1,5-bisphosphate + O2 = 2-phosphoglycolate + (2R)-3-phosphoglycerate + 2 H(+). Functionally, ruBisCO catalyzes two reactions: the carboxylation of D-ribulose 1,5-bisphosphate, the primary event in carbon dioxide fixation, as well as the oxidative fragmentation of the pentose substrate in the photorespiration process. Both reactions occur simultaneously and in competition at the same active site. In Geum borisii (Avens), this protein is Ribulose bisphosphate carboxylase large chain (rbcL).